The primary structure comprises 458 residues: NADH-quinone oxidoreductase subunit N (458 aa).

Helical transmembrane passes span 2–22 (LLILPEITLTLIALLGQCFAL), 30–50 (IIYNIVILLCIISIFLTFKYS), 62–82 (GINIGISKSIVLLFTIVSLII), 93–113 (AIKFEFITLILLSIVGIFVAI), 118–138 (FLLLFCGMELTALTSYALAGF), 153–173 (FILGSLVTCLSLFGISFIYGF), 196–216 (LIIGIVLFLSSIFFKLASSPL), 235–255 (FTSAAKIGMVIVLFNISKLII), 261–281 (INYNLIKIIAILSMLFGAFGA), 290–310 (LMAYSTILNIGYVLIGVILPN), 319–339 (LYILIYAVVSIGFFTCLIMLF), 361–381 (IAALISIVMFSMIGIPPLTGF), 397–417 (FTLAYCGIFTSVVAAFYYLKV), and 438–458 (LLLINYLVLVFLLFGSFIILF).

Belongs to the complex I subunit 2 family. In terms of assembly, NDH-1 is composed of 14 different subunits. Subunits NuoA, H, J, K, L, M, N constitute the membrane sector of the complex.

The protein resides in the cell inner membrane. The catalysed reaction is a quinone + NADH + 5 H(+)(in) = a quinol + NAD(+) + 4 H(+)(out). In terms of biological role, NDH-1 shuttles electrons from NADH, via FMN and iron-sulfur (Fe-S) centers, to quinones in the respiratory chain. The immediate electron acceptor for the enzyme in this species is believed to be ubiquinone. Couples the redox reaction to proton translocation (for every two electrons transferred, four hydrogen ions are translocated across the cytoplasmic membrane), and thus conserves the redox energy in a proton gradient. In Rickettsia typhi (strain ATCC VR-144 / Wilmington), this protein is NADH-quinone oxidoreductase subunit N.